The chain runs to 222 residues: Probable transaldolase (222 aa).

Lysine 91 functions as the Schiff-base intermediate with substrate in the catalytic mechanism.

This sequence belongs to the transaldolase family. Type 3B subfamily.

The protein localises to the cytoplasm. It catalyses the reaction D-sedoheptulose 7-phosphate + D-glyceraldehyde 3-phosphate = D-erythrose 4-phosphate + beta-D-fructose 6-phosphate. Its pathway is carbohydrate degradation; pentose phosphate pathway; D-glyceraldehyde 3-phosphate and beta-D-fructose 6-phosphate from D-ribose 5-phosphate and D-xylulose 5-phosphate (non-oxidative stage): step 2/3. Its function is as follows. Transaldolase is important for the balance of metabolites in the pentose-phosphate pathway. In Chlorobium chlorochromatii (strain CaD3), this protein is Probable transaldolase.